A 395-amino-acid chain; its full sequence is NAD(P)H-quinone oxidoreductase subunit H (395 aa).

This sequence belongs to the complex I 49 kDa subunit family. In terms of assembly, NDH-1 can be composed of about 15 different subunits; different subcomplexes with different compositions have been identified which probably have different functions.

It localises to the cellular thylakoid membrane. The enzyme catalyses a plastoquinone + NADH + (n+1) H(+)(in) = a plastoquinol + NAD(+) + n H(+)(out). It catalyses the reaction a plastoquinone + NADPH + (n+1) H(+)(in) = a plastoquinol + NADP(+) + n H(+)(out). In terms of biological role, NDH-1 shuttles electrons from an unknown electron donor, via FMN and iron-sulfur (Fe-S) centers, to quinones in the respiratory and/or the photosynthetic chain. The immediate electron acceptor for the enzyme in this species is believed to be plastoquinone. Couples the redox reaction to proton translocation, and thus conserves the redox energy in a proton gradient. Cyanobacterial NDH-1 also plays a role in inorganic carbon-concentration. This chain is NAD(P)H-quinone oxidoreductase subunit H, found in Prochlorococcus marinus (strain MIT 9515).